Reading from the N-terminus, the 415-residue chain is Heterogeneous nuclear ribonucleoprotein F (415 aa).

Methionine 1 carries the post-translational modification N-acetylmethionine. Residue methionine 2 is modified to N-acetylmethionine; in Heterogeneous nuclear ribonucleoprotein F, N-terminally processed. In terms of domain architecture, RRM 1 spans 11–90; sequence YVVKLRGLPW…RYIEVFKSHR (80 aa). Residue lysine 72 forms a Glycyl lysine isopeptide (Lys-Gly) (interchain with G-Cter in SUMO) linkage. Residues 81 to 86 form an interaction with RNA region; the sequence is RYIEVF. Residue lysine 87 forms a Glycyl lysine isopeptide (Lys-Gly) (interchain with G-Cter in SUMO2) linkage. Serine 104, serine 107, and serine 161 each carry phosphoserine. The RRM 2 domain occupies 111 to 188; it reads GFVRLRGLPF…RYIEVFKSSQ (78 aa). A Glycyl lysine isopeptide (Lys-Gly) (interchain with G-Cter in SUMO2) cross-link involves residue lysine 167. An interaction with RNA region spans residues 179–184; that stretch reads RYIEVF. Residue lysine 185 forms a Glycyl lysine isopeptide (Lys-Gly) (interchain with G-Cter in SUMO2) linkage. Phosphoserine occurs at positions 187, 193, and 195. Lysine 200 carries the post-translational modification N6-acetyllysine; alternate. A Glycyl lysine isopeptide (Lys-Gly) (interchain with G-Cter in SUMO2); alternate cross-link involves residue lysine 200. Phosphothreonine is present on threonine 215. Residue lysine 224 is modified to N6-acetyllysine; alternate. Lysine 224 participates in a covalent cross-link: Glycyl lysine isopeptide (Lys-Gly) (interchain with G-Cter in SUMO2); alternate. Serine 265 carries the post-translational modification Phosphoserine. The region spanning 289 to 366 is the RRM 3 domain; that stretch reads HCVHMRGLPY…IELFLNSTTG (78 aa). Residues 355 to 360 are interaction with RNA; sequence RYIELF.

In terms of assembly, identified in the spliceosome C complex. Interacts with AGO1, AGO2, TBP and TXNL4/DIM1. In terms of processing, sumoylated.

Its subcellular location is the nucleus. The protein localises to the nucleoplasm. Its function is as follows. Component of the heterogeneous nuclear ribonucleoprotein (hnRNP) complexes which provide the substrate for the processing events that pre-mRNAs undergo before becoming functional, translatable mRNAs in the cytoplasm. Plays a role in the regulation of alternative splicing events. Binds G-rich sequences in pre-mRNAs and keeps target RNA in an unfolded state. This Mus musculus (Mouse) protein is Heterogeneous nuclear ribonucleoprotein F (Hnrnpf).